Reading from the N-terminus, the 545-residue chain is Phenylalanine--tRNA ligase beta subunit (545 aa).

Residues 268–343 (FLHKIQNVRE…MSIGYNNLEP (76 aa)) form the B5 domain. Positions 321, 327, 330, and 331 each coordinate Mg(2+).

The protein belongs to the phenylalanyl-tRNA synthetase beta subunit family. Type 2 subfamily. As to quaternary structure, tetramer of two alpha and two beta subunits. Mg(2+) is required as a cofactor.

The protein resides in the cytoplasm. It carries out the reaction tRNA(Phe) + L-phenylalanine + ATP = L-phenylalanyl-tRNA(Phe) + AMP + diphosphate + H(+). The polypeptide is Phenylalanine--tRNA ligase beta subunit (Saccharolobus islandicus (strain Y.N.15.51 / Yellowstone #2) (Sulfolobus islandicus)).